Here is a 1115-residue protein sequence, read N- to C-terminus: Disheveled-associated activator of morphogenesis 2 (1115 aa).

The region spanning 40-416 (GPIPNPEELN…QIVLQDERGV (377 aa)) is the GBD/FH3 domain. Residues 434-515 (MLINENEVKQ…ELVARHNESS (82 aa)) are a coiled coil. Disordered regions lie at residues 510 to 605 (RHNE…SHPL) and 655 to 697 (QEGP…SATG). Residues 518-694 (PVSSPPPPGG…TEKASRSMVS (177 aa)) form the FH1 domain. Over residues 540–583 (LPPPPPPLPFDSCPPPPAPPLPPGGPPIPPGAPPCFSSGPPPSH) the composition is skewed to pro residues. The 448-residue stretch at 595–1042 (KKRIPQPSHP…DERRARMEFM (448 aa)) folds into the FH2 domain. Positions 1065 to 1095 (EESGEFDDLVSALRSGEVFDKDLSKFKRNRK) constitute a DAD domain.

This sequence belongs to the formin homology family. Interacts with DVL3. Interacts with INF2. As to expression, in early embryogenesis, expression is confined to embryonic ectoderm. Highly dynamic expression in later stages of gastrulation. In early somite stages, detected in posterior node and persists until 9-10 somites have developed when expression is concentrated in the chordoneural hinge. During organogenesis, expressed in the CNS, PNS, liver primordia, limb buds and genital tubercle.

Its function is as follows. Key regulator of the Wnt signaling pathway, which is required for various processes during development, such as dorsal patterning, determination of left/right symmetry or myelination in the central nervous system. Acts downstream of Wnt ligands and upstream of beta-catenin (CTNNB1). Required for canonical Wnt signaling pathway during patterning in the dorsal spinal cord by promoting the aggregation of Disheveled (Dvl) complexes, thereby clustering and formation of Wnt receptor signalosomes and potentiating Wnt activity. During dorsal patterning of the spinal cord, inhibits oligodendrocytes differentiation via interaction with PIP5K1A. Also regulates non-canonical Wnt signaling pathway. Acts downstream of PITX2 in the developing gut and is required for left/right asymmetry within dorsal mesentery: affects mesenchymal condensation by lengthening cadherin-based junctions through WNT5A and non-canonical Wnt signaling, inducing polarized condensation in the left dorsal mesentery necessary to initiate gut rotation. Together with DAAM1, required for myocardial maturation and sarcomere assembly. Is a regulator of actin nucleation and elongation, filopodia formation and podocyte migration. The protein is Disheveled-associated activator of morphogenesis 2 of Mus musculus (Mouse).